Consider the following 1079-residue polypeptide: MEDEAALDRGASFLKHVCDEEEVEGHHTIYIGVHVPKSYRRRRRHKRKAGHREKKEKERVSENYSDKSDVENADESSSSILKPLISPAAERIRFILGEEDDSPAPPQLFTELDELLAVDGQEMEWKETARWIKFEEKVEQGGERWSKPHVATLSLHSLFELRTCMEKGSIMLDREAASLPQLVEMIVDHQIETGLLKPDLKDKVTYTLLRKHRHQTKKSNLRSLADIGKTVSSASRMFTSPENGSPAMTHRNLTSSSLNDISDKPEKDQLKNKFMKKLPRDAEASNVLVGEVDFLDSPFIAFVRLQQAVMLGALTEVPVPTRFLFILLGPKGKAKSYHEIGRAIATLMSDEVFHDIAYKAKDRQDLIAGIDEFLDEVIVLPPGEWDPAIRIEPPKSLPSSDKRKNMYSGGENVQMNGDTPHDGGHGGGGHADCEELQRTGRFCGGLIKDIKRKAPFFASDFYDALNIQALSAILFIYLATVTNAITFGGLLGDATDNMQGVLESFLGTAVSGAVFCLFAGQPLTILSSTGPVLVFERLLFNFSKDHNFDYLEFRLWIGLWSAFLCLILVATDASFLVQYFTRFTEEGFSSLISFIFIYDAFKKMIKLADYYPINSNFKVGYNTQFSCVCVPPNPVNISVSNDTTLAPEDLQTVSSADMYHNATFDWALLTKKECLKYEGKLVGNNCDFVPDITLMSFILFLGTYTSSMALKKFKTSRYFPTTARKLISDFAIILSILIFCVIDALVGVDTPKLIVPSEFKPTSPNRGWFVPPFGGNPWWVYLAAAIPALLVTILIFMDQQITAVIVNRKEHKLKKGAGYHLDLFWVAILMVVCSFMALPWYVAATVISIAHIDSLKMETETSAPGEQPKFLGVREQRVTGTLVFILTGLSVFMAPILKFIPMPVLYGVFLYMGVASLNGVQFMDRLKLLLMPLKHQPDFIYLRHVPLRRVHLFTFLQVLCLALLWILKSTVAAIIFPVMILALVAVRKGMDYLFSQHDLSFLDDVIPEKDKKKKEDEKKKKKKKGSLDSDSDDSDCPYSEKVPSIKIPMDIMEQQPFLSDSKPSDRERSPTFLERHTSC.

The interval 1–62 (MEDEAALDRG…EKKEKERVSE (62 aa)) is required for interaction with AHCYL1. Residues 1–466 (MEDEAALDRG…FASDFYDALN (466 aa)) are Cytoplasmic-facing. The residue at position 30 (tyrosine 30) is a Phosphotyrosine. Basic residues predominate over residues 39–52 (YRRRRRHKRKAGHR). The tract at residues 39 to 78 (YRRRRRHKRKAGHREKKEKERVSENYSDKSDVENADESSS) is disordered. Positions 53 to 70 (EKKEKERVSENYSDKSDV) are enriched in basic and acidic residues. A phosphoserine mark is found at serine 61, serine 65, serine 68, serine 223, serine 232, serine 233, and serine 245. The segment at 238–265 (FTSPENGSPAMTHRNLTSSSLNDISDKP) is disordered. Threonine 249 and threonine 254 each carry phosphothreonine. Polar residues predominate over residues 251 to 260 (RNLTSSSLND). 3 positions are modified to phosphoserine: serine 256, serine 257, and serine 262. Residues 467–491 (IQALSAILFIYLATVTNAITFGGLL) form a helical membrane-spanning segment. Residues 492-501 (GDATDNMQGV) lie on the Extracellular side of the membrane. Residues 502–520 (LESFLGTAVSGAVFCLFAG) traverse the membrane as a helical segment. Residue glutamine 521 is a topological domain, cytoplasmic. A discontinuously helical membrane pass occupies residues 522-542 (PLTILSSTGPVLVFERLLFNF). The Extracellular segment spans residues 543 to 550 (SKDHNFDY). A helical transmembrane segment spans residues 551 to 571 (LEFRLWIGLWSAFLCLILVAT). Over 572-585 (DASFLVQYFTRFTE) the chain is Cytoplasmic. A helical membrane pass occupies residues 586–609 (EGFSSLISFIFIYDAFKKMIKLAD). Residues 610-692 (YYPINSNFKV…GNNCDFVPDI (83 aa)) lie on the Extracellular side of the membrane. The helical transmembrane segment at 693–710 (TLMSFILFLGTYTSSMAL) threads the bilayer. Over 711–725 (KKFKTSRYFPTTARK) the chain is Cytoplasmic. Residues 726–745 (LISDFAIILSILIFCVIDAL) traverse the membrane as a helical segment. Residues 746–779 (VGVDTPKLIVPSEFKPTSPNRGWFVPPFGGNPWW) are Extracellular-facing. Residues 748–779 (VDTPKLIVPSEFKPTSPNRGWFVPPFGGNPWW) are interaction with CA4. Residues 780 to 807 (VYLAAAIPALLVTILIFMDQQITAVIVN) traverse the membrane as a helical segment. Residues 808-819 (RKEHKLKKGAGY) are Cytoplasmic-facing. A helical membrane pass occupies residues 820 to 836 (HLDLFWVAILMVVCSFM). A topological domain (extracellular) is located at residue alanine 837. The chain crosses the membrane as a discontinuously helical span at residues 838-855 (LPWYVAATVISIAHIDSL). Residues 856 to 877 (KMETETSAPGEQPKFLGVREQR) lie on the Cytoplasmic side of the membrane. The helical transmembrane segment at 878–894 (VTGTLVFILTGLSVFMA) threads the bilayer. The Extracellular segment spans residues 895 to 901 (PILKFIP). Residues 902-918 (MPVLYGVFLYMGVASLN) form a helical membrane-spanning segment. Topologically, residues 919–960 (GVQFMDRLKLLLMPLKHQPDFIYLRHVPLRRVHLFTFLQVLC) are cytoplasmic. Positions 961–986 (LALLWILKSTVAAIIFPVMILALVAV) form an intramembrane region, discontinuously helical. Over 987 to 1079 (RKGMDYLFSQ…PTFLERHTSC (93 aa)) the chain is Cytoplasmic. The tract at residues 1002–1004 (LDD) is CA2-binding. The segment at 1012–1079 (KKKEDEKKKK…PTFLERHTSC (68 aa)) is disordered. Phosphoserine; by PKA is present on serine 1026. The residue at position 1029 (serine 1029) is a Phosphoserine. The segment at 1030-1033 (DSDD) is CA2-binding. A phosphoserine mark is found at serine 1034 and serine 1044. The tract at residues 1057 to 1059 (FLS) is required for basolateral targeting. Over residues 1062–1079 (KPSDRERSPTFLERHTSC) the composition is skewed to basic and acidic residues. Position 1069 is a phosphoserine (serine 1069).

Belongs to the anion exchanger (TC 2.A.31) family. Homodimer. Interacts with CA2/carbonic anhydrase 2 and CA4/carbonic anhydrase 4 which may regulate transporter activity. Isoform 1 but not isoform 2 interacts with AHCYL1 (via PEST domain when phosphorylated); the interaction increases SLC4A4 isoform 1 activity. Interacts with AHCYL2. In terms of processing, phosphorylation of Ser-1026 by PKA increases the binding of CA2 and changes the Na(+):HCO3(-) stoichiometry of the transporter from 3:1 to 2:1. Phosphorylated in presence of STK39 and dephosphorylated in presence of PP1 phosphatase; phosphorylation seems to inhibit SLC4A4 activity. N-glycosylated. May not be necessary for the transporter basic functions. In terms of tissue distribution, expressed in vas deferens epithelia (at protein level).

The protein localises to the basolateral cell membrane. Its subcellular location is the cell membrane. It catalyses the reaction 2 hydrogencarbonate(out) + Na(+)(out) = 2 hydrogencarbonate(in) + Na(+)(in). The catalysed reaction is 3 hydrogencarbonate(out) + Na(+)(out) = 3 hydrogencarbonate(in) + Na(+)(in). In terms of biological role, electrogenic sodium/bicarbonate cotransporter with a Na(+):HCO3(-) stoichiometry varying from 1:2 to 1:3. May regulate bicarbonate influx/efflux at the basolateral membrane of cells and regulate intracellular pH. In Sus scrofa (Pig), this protein is Electrogenic sodium bicarbonate cotransporter 1 (SLC4A4).